Here is a 634-residue protein sequence, read N- to C-terminus: DNA-directed RNA polymerase subunit gamma (634 aa).

Zn(2+) is bound by residues cysteine 74, cysteine 76, cysteine 89, and cysteine 92. Mg(2+) contacts are provided by aspartate 471, aspartate 473, and aspartate 475.

Belongs to the RNA polymerase beta' chain family. RpoC1 subfamily. In terms of assembly, in cyanobacteria the RNAP catalytic core is composed of 2 alpha, 1 beta, 1 beta', 1 gamma and 1 omega subunit. When a sigma factor is associated with the core the holoenzyme is formed, which can initiate transcription. Mg(2+) serves as cofactor. The cofactor is Zn(2+).

The enzyme catalyses RNA(n) + a ribonucleoside 5'-triphosphate = RNA(n+1) + diphosphate. Its function is as follows. DNA-dependent RNA polymerase catalyzes the transcription of DNA into RNA using the four ribonucleoside triphosphates as substrates. The polypeptide is DNA-directed RNA polymerase subunit gamma (Prochlorococcus marinus (strain MIT 9303)).